Reading from the N-terminus, the 75-residue chain is uncharacterized protein (75 aa).

Residues 44 to 64 form a helical membrane-spanning segment; it reads IINMIVIWAALIALFVKLYIL.

It is found in the host membrane. This is an uncharacterized protein from Ostreid herpesvirus 1 (isolate France) (OsHV-1).